We begin with the raw amino-acid sequence, 117 residues long: Biogenesis of lysosome-related organelles complex 1 subunit BLS1 (117 aa).

Positions 97 to 117 (EGKAQDTEQAPGKGDRIFRSD) are disordered.

Belongs to the BLOC1S1 family. As to quaternary structure, component of the biogenesis of lysosome-related organelles complex-1 (BLOC-1).

The protein localises to the endosome. Its function is as follows. Component of the biogenesis of lysosome-related organelles complex-1 (BLOC-1), a complex involved in endosomal cargo sorting. The polypeptide is Biogenesis of lysosome-related organelles complex 1 subunit BLS1 (BLS1) (Eremothecium gossypii (strain ATCC 10895 / CBS 109.51 / FGSC 9923 / NRRL Y-1056) (Yeast)).